Here is a 272-residue protein sequence, read N- to C-terminus: Putative phosphoenolpyruvate synthase regulatory protein (272 aa).

152 to 159 (GVSRCGKT) is an ADP binding site.

This sequence belongs to the pyruvate, phosphate/water dikinase regulatory protein family. PSRP subfamily.

It catalyses the reaction [pyruvate, water dikinase] + ADP = [pyruvate, water dikinase]-phosphate + AMP + H(+). The catalysed reaction is [pyruvate, water dikinase]-phosphate + phosphate + H(+) = [pyruvate, water dikinase] + diphosphate. Bifunctional serine/threonine kinase and phosphorylase involved in the regulation of the phosphoenolpyruvate synthase (PEPS) by catalyzing its phosphorylation/dephosphorylation. This is Putative phosphoenolpyruvate synthase regulatory protein from Pseudomonas putida (strain GB-1).